The chain runs to 246 residues: tRNA (guanine-N(1)-)-methyltransferase (246 aa).

S-adenosyl-L-methionine contacts are provided by residues glycine 113 and 133–138 (IGDYVL).

It belongs to the RNA methyltransferase TrmD family. In terms of assembly, homodimer.

Its subcellular location is the cytoplasm. The enzyme catalyses guanosine(37) in tRNA + S-adenosyl-L-methionine = N(1)-methylguanosine(37) in tRNA + S-adenosyl-L-homocysteine + H(+). Specifically methylates guanosine-37 in various tRNAs. In Haemophilus influenzae (strain 86-028NP), this protein is tRNA (guanine-N(1)-)-methyltransferase.